Here is a 195-residue protein sequence, read N- to C-terminus: Imidazoleglycerol-phosphate dehydratase (195 aa).

The protein belongs to the imidazoleglycerol-phosphate dehydratase family.

Its subcellular location is the cytoplasm. It catalyses the reaction D-erythro-1-(imidazol-4-yl)glycerol 3-phosphate = 3-(imidazol-4-yl)-2-oxopropyl phosphate + H2O. It participates in amino-acid biosynthesis; L-histidine biosynthesis; L-histidine from 5-phospho-alpha-D-ribose 1-diphosphate: step 6/9. This is Imidazoleglycerol-phosphate dehydratase from Nitrosomonas eutropha (strain DSM 101675 / C91 / Nm57).